A 403-amino-acid polypeptide reads, in one-letter code: Para-nitrophenol 4-monooxygenase (403 aa).

FAD-binding positions include 6-35 and 279-289; these read GVVV…VLEA and FRRGRVVLAGD.

It belongs to the PheA/TfdB FAD monooxygenase family. Monomer. The cofactor is FAD.

It catalyses the reaction 4-nitrophenol + NADPH + O2 + H(+) = 1,4-benzoquinone + nitrite + NADP(+) + H2O. The protein operates within xenobiotic degradation; 4-nitrophenol degradation. Functionally, involved in the degradation of para-nitrophenol (4-NP). Catalyzes oxidation of 4-nitrophenol (4-NP) at position 4 with concomitant removal of the nitro group as nitrite and production of para-benzoquinone. This Pseudomonas sp. (strain WBC-3) protein is Para-nitrophenol 4-monooxygenase (pnpA).